The chain runs to 449 residues: Tol-Pal system protein TolB (449 aa).

An N-terminal signal peptide occupies residues 1 to 36 (MDCPNMPLHINRRQMLLSAATAAGALALGPARDAFG).

Belongs to the TolB family. In terms of assembly, the Tol-Pal system is composed of five core proteins: the inner membrane proteins TolA, TolQ and TolR, the periplasmic protein TolB and the outer membrane protein Pal. They form a network linking the inner and outer membranes and the peptidoglycan layer.

The protein resides in the periplasm. Part of the Tol-Pal system, which plays a role in outer membrane invagination during cell division and is important for maintaining outer membrane integrity. This is Tol-Pal system protein TolB from Rhodopseudomonas palustris (strain HaA2).